The chain runs to 84 residues: Fulditoxin (84 aa).

The signal sequence occupies residues 1-21; sequence MKTLLLTLVVVTIVCLDLGNS. 4 disulfides stabilise this stretch: cysteine 24/cysteine 41, cysteine 34/cysteine 59, cysteine 63/cysteine 71, and cysteine 72/cysteine 77. A Zn(2+)-binding site is contributed by histidine 50.

The protein belongs to the three-finger toxin family. Short-chain subfamily. As to quaternary structure, homodimer; non-covalently linked. Is able to form a tetramer of dimers in the presence of 2 zinc ions. Expressed by the venom gland.

It is found in the secreted. Postsynaptic neurotoxin that produces potent, and completely reversible, postsynaptic neuromuscular blockade, as well as broad spectrum inhibition of human muscle and neuronal nicotinic acetylcholine receptors (nAChRs). Inhibition is potent or moderate, depending on the receptor (alpha-1-beta-1-delta-epsilon/CHRNA1-CHRNB1-CHRND-CHRNE (IC(50)=2.56 uM), alpha-4-beta-2/CHRNA4-CHRNB2 (IC(50)=1.8 uM), alpha-7/CHRNA7 (IC(50)=7 uM), and alpha-3-beta-2/CHRNA3-CHRNB2 (IC(50)=12.6 uM)). Acts as a competitive antagonist of ACh. Binds to chicken muscle-type nicotinic acetylcholine receptor (AChR) with high potency compared with the cloned human receptor. Unlike short-chain alpha-3FTxs that only bind to muscle nAChRs, this toxin utilizes dimerization to expand its pharmacological targets to block neuronal nAChRs. This is Fulditoxin from Micrurus fulvius (Eastern coral snake).